The chain runs to 566 residues: Proline--tRNA ligase 1 (566 aa).

This sequence belongs to the class-II aminoacyl-tRNA synthetase family. ProS type 1 subfamily. In terms of assembly, homodimer.

It localises to the cytoplasm. The enzyme catalyses tRNA(Pro) + L-proline + ATP = L-prolyl-tRNA(Pro) + AMP + diphosphate. In terms of biological role, catalyzes the attachment of proline to tRNA(Pro) in a two-step reaction: proline is first activated by ATP to form Pro-AMP and then transferred to the acceptor end of tRNA(Pro). As ProRS can inadvertently accommodate and process non-cognate amino acids such as alanine and cysteine, to avoid such errors it has two additional distinct editing activities against alanine. One activity is designated as 'pretransfer' editing and involves the tRNA(Pro)-independent hydrolysis of activated Ala-AMP. The other activity is designated 'posttransfer' editing and involves deacylation of mischarged Ala-tRNA(Pro). The misacylated Cys-tRNA(Pro) is not edited by ProRS. The protein is Proline--tRNA ligase 1 of Bacillus cereus (strain ZK / E33L).